The primary structure comprises 471 residues: UDP-N-acetylmuramate--L-alanine ligase (471 aa).

Position 125–131 (125–131) interacts with ATP; the sequence is GTHGKTT.

The protein belongs to the MurCDEF family.

The protein localises to the cytoplasm. It carries out the reaction UDP-N-acetyl-alpha-D-muramate + L-alanine + ATP = UDP-N-acetyl-alpha-D-muramoyl-L-alanine + ADP + phosphate + H(+). Its pathway is cell wall biogenesis; peptidoglycan biosynthesis. In terms of biological role, cell wall formation. The sequence is that of UDP-N-acetylmuramate--L-alanine ligase from Kineococcus radiotolerans (strain ATCC BAA-149 / DSM 14245 / SRS30216).